The following is a 539-amino-acid chain: Trigger factor (539 aa).

Residues 163-252 form the PPIase FKBP-type domain; the sequence is GDQLTVQIET…VLDVQERLLP (90 aa). Composition is skewed to low complexity over residues 434–447 and 475–484; these read SFEQAASPEAASEP and AASPEAASEP. A disordered region spans residues 434–539; sequence SFEQAASPEA…DVATPEARTE (106 aa). Residues 509 to 528 are compositionally biased toward polar residues; that stretch reads TETPIVSQEENGESVENQSV.

Belongs to the FKBP-type PPIase family. Tig subfamily.

It localises to the cytoplasm. The catalysed reaction is [protein]-peptidylproline (omega=180) = [protein]-peptidylproline (omega=0). Its function is as follows. Involved in protein export. Acts as a chaperone by maintaining the newly synthesized protein in an open conformation. Functions as a peptidyl-prolyl cis-trans isomerase. The chain is Trigger factor from Roseiflexus sp. (strain RS-1).